The sequence spans 106 residues: Large ribosomal subunit protein eL42 (106 aa).

The protein belongs to the eukaryotic ribosomal protein eL42 family.

It localises to the cytoplasm. This chain is Large ribosomal subunit protein eL42 (RPL44), found in Trypanosoma brucei brucei.